The sequence spans 121 residues: Large ribosomal subunit protein bL12 (121 aa).

The protein belongs to the bacterial ribosomal protein bL12 family. As to quaternary structure, homodimer. Part of the ribosomal stalk of the 50S ribosomal subunit. Forms a multimeric L10(L12)X complex, where L10 forms an elongated spine to which 2 to 4 L12 dimers bind in a sequential fashion. Binds GTP-bound translation factors.

Its function is as follows. Forms part of the ribosomal stalk which helps the ribosome interact with GTP-bound translation factors. Is thus essential for accurate translation. The chain is Large ribosomal subunit protein bL12 from Pseudomonas syringae pv. tomato (strain ATCC BAA-871 / DC3000).